Consider the following 353-residue polypeptide: MTITLGRFTKEENDLFDIMDDWLRRDRFVFVGWSGLLLFPCAYFALGGWFTGTTFVTSWYTHGLASSYLEGCNFLTAAVSTPANSLAHSLLLLWGPEAQGDFTRWCQLGGLWTFVALHGAFGLIGFMLRQFELARSVQLRPYNAIAFSAPIAVFVSVFLIYPLGQSGWFFAPSFGVAAIFRFILFFQGFHNWTLNPFHMMGVAGVLGAALLCAIHGATVENTLFEDGDGANTFRAFNPTQAEETYSMVTANRFWSQIFGVAFSNKRWLHFFMLFVPVTGLWMSALGVVGLALNLRAYDFVSQEIRAAEDPEFETFYTKNILLNEGIRAWMAAQDQPHENLIFPEEVLPRGNAL.

N-acetylthreonine is present on Thr2. Thr2 carries the post-translational modification Phosphothreonine. The chain crosses the membrane as a helical span at residues 41-61; that stretch reads CAYFALGGWFTGTTFVTSWYT. Residue His118 participates in chlorophyll a binding. A helical membrane pass occupies residues 125–141; sequence GFMLRQFELARSVQLRP. Residues Gln130 and Asn143 each contribute to the pheophytin a site. The chain crosses the membrane as a helical span at residues 153–166; sequence VFVSVFLIYPLGQS. His198 provides a ligand contact to chlorophyll a. Residues 208-228 form a helical membrane-spanning segment; sequence AALLCAIHGATVENTLFEDGD. His215 and Phe262 together coordinate a plastoquinone. His215 is a binding site for Fe cation. His269 serves as a coordination point for Fe cation. The helical transmembrane segment at 279–295 threads the bilayer; sequence GLWMSALGVVGLALNLR.

This sequence belongs to the reaction center PufL/M/PsbA/D family. PSII is composed of 1 copy each of membrane proteins PsbA, PsbB, PsbC, PsbD, PsbE, PsbF, PsbH, PsbI, PsbJ, PsbK, PsbL, PsbM, PsbT, PsbX, PsbY, PsbZ, Psb30/Ycf12, at least 3 peripheral proteins of the oxygen-evolving complex and a large number of cofactors. It forms dimeric complexes. The cofactor is The D1/D2 heterodimer binds P680, chlorophylls that are the primary electron donor of PSII, and subsequent electron acceptors. It shares a non-heme iron and each subunit binds pheophytin, quinone, additional chlorophylls, carotenoids and lipids. There is also a Cl(-1) ion associated with D1 and D2, which is required for oxygen evolution. The PSII complex binds additional chlorophylls, carotenoids and specific lipids..

Its subcellular location is the plastid. The protein resides in the chloroplast thylakoid membrane. The catalysed reaction is 2 a plastoquinone + 4 hnu + 2 H2O = 2 a plastoquinol + O2. Functionally, photosystem II (PSII) is a light-driven water:plastoquinone oxidoreductase that uses light energy to abstract electrons from H(2)O, generating O(2) and a proton gradient subsequently used for ATP formation. It consists of a core antenna complex that captures photons, and an electron transfer chain that converts photonic excitation into a charge separation. The D1/D2 (PsbA/PsbD) reaction center heterodimer binds P680, the primary electron donor of PSII as well as several subsequent electron acceptors. D2 is needed for assembly of a stable PSII complex. In Chloranthus spicatus (Chulantree), this protein is Photosystem II D2 protein.